A 232-amino-acid polypeptide reads, in one-letter code: Phosphatidylserine decarboxylase proenzyme (232 aa).

Ser-190 (schiff-base intermediate with substrate; via pyruvic acid) is an active-site residue. Ser-190 carries the post-translational modification Pyruvic acid (Ser); by autocatalysis.

This sequence belongs to the phosphatidylserine decarboxylase family. PSD-A subfamily. As to quaternary structure, heterodimer of a large membrane-associated beta subunit and a small pyruvoyl-containing alpha subunit. The cofactor is pyruvate. Post-translationally, is synthesized initially as an inactive proenzyme. Formation of the active enzyme involves a self-maturation process in which the active site pyruvoyl group is generated from an internal serine residue via an autocatalytic post-translational modification. Two non-identical subunits are generated from the proenzyme in this reaction, and the pyruvate is formed at the N-terminus of the alpha chain, which is derived from the carboxyl end of the proenzyme. The post-translation cleavage follows an unusual pathway, termed non-hydrolytic serinolysis, in which the side chain hydroxyl group of the serine supplies its oxygen atom to form the C-terminus of the beta chain, while the remainder of the serine residue undergoes an oxidative deamination to produce ammonia and the pyruvoyl prosthetic group on the alpha chain.

The protein localises to the cell membrane. It catalyses the reaction a 1,2-diacyl-sn-glycero-3-phospho-L-serine + H(+) = a 1,2-diacyl-sn-glycero-3-phosphoethanolamine + CO2. It functions in the pathway phospholipid metabolism; phosphatidylethanolamine biosynthesis; phosphatidylethanolamine from CDP-diacylglycerol: step 2/2. In terms of biological role, catalyzes the formation of phosphatidylethanolamine (PtdEtn) from phosphatidylserine (PtdSer). The polypeptide is Phosphatidylserine decarboxylase proenzyme (Rhizobium rhizogenes (strain K84 / ATCC BAA-868) (Agrobacterium radiobacter)).